Consider the following 407-residue polypeptide: Enolase-binding protein (407 aa).

The first 24 residues, 1–24, serve as a signal peptide directing secretion; that stretch reads MALGNALYPLTATVFLCVVGFATS. The Extracellular portion of the chain corresponds to 25–366; that stretch reads SNENSRFLIN…FGQAYPGFRN (342 aa). Residues asparagine 52, asparagine 78, asparagine 161, and asparagine 250 are each glycosylated (N-linked (GlcNAc...) asparagine). Residues 367 to 387 traverse the membrane as a helical segment; it reads VAIGAAILFFSVLGVAIIDMI. Over 388–407 the chain is Cytoplasmic; sequence RRTIANRRAKRLHLGKYSRT.

(Microbial infection) Interacts with ENO/enolase from parasites P.berghei and P.falciparum. In terms of tissue distribution, expressed in the female midgut epithelium.

It localises to the cell membrane. Functionally, (Microbial infection) Acts as a receptor for ENO/enolase from parasites P.berghei and P.falciparum. The interaction is involved in the invasion of the mosquito midgut by P.berghei ookinete, but is dispensable for P.falciparum ookinete invasion. The sequence is that of Enolase-binding protein from Anopheles gambiae (African malaria mosquito).